The chain runs to 69 residues: Probable cold shock protein y4cH (69 aa).

Positions 5–65 (GTVKWFNATK…DRKSGKMSAD (61 aa)) constitute a CSD domain.

The protein localises to the cytoplasm. In Sinorhizobium fredii (strain NBRC 101917 / NGR234), this protein is Probable cold shock protein y4cH.